The primary structure comprises 205 residues: ITG-like peptide (205 aa).

The first 15 residues, 1 to 15, serve as a signal peptide directing secretion; that stretch reads MRVYAAITLVLVANT. 2 propeptides span residues 16–188 and 202–205; these read AYIG…TSGE and MPFA.

As to expression, expressed throughout the nervous system (at protein level).

The protein resides in the secreted. This Camponotus floridanus (Florida carpenter ant) protein is ITG-like peptide.